Here is a 502-residue protein sequence, read N- to C-terminus: D-alanine--D-alanyl carrier protein ligase (502 aa).

150–151 (TS) is an ATP binding site. Asp-195 is a binding site for D-alanine. 290-295 (NTYGPT) serves as a coordination point for ATP. D-alanine is bound at residue Val-299. Asp-381 and Lys-490 together coordinate ATP. Lys-490 provides a ligand contact to D-alanine.

It belongs to the ATP-dependent AMP-binding enzyme family. DltA subfamily.

It localises to the cytoplasm. It carries out the reaction holo-[D-alanyl-carrier protein] + D-alanine + ATP = D-alanyl-[D-alanyl-carrier protein] + AMP + diphosphate. Its pathway is cell wall biogenesis; lipoteichoic acid biosynthesis. Functionally, catalyzes the first step in the D-alanylation of lipoteichoic acid (LTA), the activation of D-alanine and its transfer onto the D-alanyl carrier protein (Dcp) DltC. In an ATP-dependent two-step reaction, forms a high energy D-alanyl-AMP intermediate, followed by transfer of the D-alanyl residue as a thiol ester to the phosphopantheinyl prosthetic group of the Dcp. D-alanylation of LTA plays an important role in modulating the properties of the cell wall in Gram-positive bacteria, influencing the net charge of the cell wall. In Bacillus licheniformis (strain ATCC 14580 / DSM 13 / JCM 2505 / CCUG 7422 / NBRC 12200 / NCIMB 9375 / NCTC 10341 / NRRL NRS-1264 / Gibson 46), this protein is D-alanine--D-alanyl carrier protein ligase.